The following is a 142-amino-acid chain: Mini-ribonuclease 3 (142 aa).

Residue aspartate 33 is part of the active site.

It belongs to the MrnC RNase family. Homodimer. Requires Mg(2+) as cofactor.

The protein resides in the cytoplasm. Its function is as follows. Involved in correct processing of both the 5' and 3' ends of 23S rRNA precursor. Processes 30S rRNA precursor transcript even in absence of ribonuclease 3 (Rnc); Rnc processes 30S rRNA into smaller rRNA precursors. This is Mini-ribonuclease 3 from Thermoanaerobacter sp. (strain X514).